The primary structure comprises 624 residues: Bifunctional 3'-phosphoadenosine 5'-phosphosulfate synthase 1 (624 aa).

Met1 bears the N-acetylmethionine mark. The adenylyl-sulfate kinase stretch occupies residues 1 to 225 (MEIPGSLCKK…VVELLQERDI (225 aa)). Lys12 is subject to N6-acetyllysine. Position 62 to 67 (62 to 67 (GAGKTT)) interacts with ATP. Adenosine 5'-phosphosulfate contacts are provided by residues 89 to 92 (DNIR), Phe101, 106 to 109 (REEN), 132 to 133 (IS), Lys171, and 184 to 185 (GF). ATP contacts are provided by residues Cys207, Cys212, 419 to 422 (QLRN), 521 to 525 (GRDPA), and Ala563. A sulfate adenylyltransferase region spans residues 234–624 (VKELYVPENK…VEYYKSLEKA (391 aa)).

It in the N-terminal section; belongs to the APS kinase family. The protein in the C-terminal section; belongs to the sulfate adenylyltransferase family. Homodimer. As to expression, expressed in the neonatal brain and in cartilage.

It carries out the reaction sulfate + ATP + H(+) = adenosine 5'-phosphosulfate + diphosphate. The enzyme catalyses adenosine 5'-phosphosulfate + ATP = 3'-phosphoadenylyl sulfate + ADP + H(+). Its pathway is sulfur metabolism; sulfate assimilation. Its function is as follows. Bifunctional enzyme with both ATP sulfurylase and APS kinase activity, which mediates two steps in the sulfate activation pathway. The first step is the transfer of a sulfate group to ATP to yield adenosine 5'-phosphosulfate (APS), and the second step is the transfer of a phosphate group from ATP to APS yielding 3'-phosphoadenylylsulfate (PAPS: activated sulfate donor used by sulfotransferase). In mammals, PAPS is the sole source of sulfate; APS appears to be only an intermediate in the sulfate-activation pathway. Required for normal biosynthesis of sulfated L-selectin ligands in endothelial cells. The protein is Bifunctional 3'-phosphoadenosine 5'-phosphosulfate synthase 1 (Papss1) of Mus musculus (Mouse).